We begin with the raw amino-acid sequence, 590 residues long: Glutamine--fructose-6-phosphate aminotransferase [isomerizing] (590 aa).

Catalysis depends on Cys2, which acts as the Nucleophile; for GATase activity. The region spanning 2 to 219 (CGIVACILKD…DGEMVILDGD (218 aa)) is the Glutamine amidotransferase type-2 domain. 2 consecutive SIS domains span residues 277–415 (VVEE…PELM) and 438–580 (LAAT…PDKP). The active-site For Fru-6P isomerization activity is Lys585.

As to quaternary structure, homodimer.

Its subcellular location is the cytoplasm. The enzyme catalyses D-fructose 6-phosphate + L-glutamine = D-glucosamine 6-phosphate + L-glutamate. Functionally, catalyzes the first step in hexosamine metabolism, converting fructose-6P into glucosamine-6P using glutamine as a nitrogen source. In Methanothermobacter thermautotrophicus (strain ATCC 29096 / DSM 1053 / JCM 10044 / NBRC 100330 / Delta H) (Methanobacterium thermoautotrophicum), this protein is Glutamine--fructose-6-phosphate aminotransferase [isomerizing].